The chain runs to 457 residues: tRNA-2-methylthio-N(6)-dimethylallyladenosine synthase (457 aa).

The MTTase N-terminal domain occupies 3–120 (KKVYVKTFGC…LPQMIDARRE (118 aa)). Positions 12, 49, 83, 157, 161, and 164 each coordinate [4Fe-4S] cluster. The region spanning 143 to 377 (RVEGPSAFVS…QATIEENVAR (235 aa)) is the Radical SAM core domain. One can recognise a TRAM domain in the interval 380–447 (QSMLGKVERI…PHSLRGELVL (68 aa)).

Belongs to the methylthiotransferase family. MiaB subfamily. In terms of assembly, monomer. The cofactor is [4Fe-4S] cluster.

The protein localises to the cytoplasm. The catalysed reaction is N(6)-dimethylallyladenosine(37) in tRNA + (sulfur carrier)-SH + AH2 + 2 S-adenosyl-L-methionine = 2-methylsulfanyl-N(6)-dimethylallyladenosine(37) in tRNA + (sulfur carrier)-H + 5'-deoxyadenosine + L-methionine + A + S-adenosyl-L-homocysteine + 2 H(+). Its function is as follows. Catalyzes the methylthiolation of N6-(dimethylallyl)adenosine (i(6)A), leading to the formation of 2-methylthio-N6-(dimethylallyl)adenosine (ms(2)i(6)A) at position 37 in tRNAs that read codons beginning with uridine. In Burkholderia mallei (strain NCTC 10247), this protein is tRNA-2-methylthio-N(6)-dimethylallyladenosine synthase.